Here is a 278-residue protein sequence, read N- to C-terminus: Hydroxyethylthiazole kinase (278 aa).

Met-48 provides a ligand contact to substrate. ATP is bound by residues Arg-124 and Thr-175. Gly-202 is a substrate binding site.

The protein belongs to the Thz kinase family. Mg(2+) serves as cofactor.

It catalyses the reaction 5-(2-hydroxyethyl)-4-methylthiazole + ATP = 4-methyl-5-(2-phosphooxyethyl)-thiazole + ADP + H(+). It functions in the pathway cofactor biosynthesis; thiamine diphosphate biosynthesis; 4-methyl-5-(2-phosphoethyl)-thiazole from 5-(2-hydroxyethyl)-4-methylthiazole: step 1/1. In terms of biological role, catalyzes the phosphorylation of the hydroxyl group of 4-methyl-5-beta-hydroxyethylthiazole (THZ). This Clostridium botulinum (strain Eklund 17B / Type B) protein is Hydroxyethylthiazole kinase.